Here is a 551-residue protein sequence, read N- to C-terminus: Arginine--tRNA ligase (551 aa).

The 'HIGH' region signature appears at 123–133 (ANPTGPLTIGR).

It belongs to the class-I aminoacyl-tRNA synthetase family. Monomer.

It localises to the cytoplasm. The enzyme catalyses tRNA(Arg) + L-arginine + ATP = L-arginyl-tRNA(Arg) + AMP + diphosphate. The protein is Arginine--tRNA ligase of Chlorobaculum parvum (strain DSM 263 / NCIMB 8327) (Chlorobium vibrioforme subsp. thiosulfatophilum).